Here is a 466-residue protein sequence, read N- to C-terminus: MSTEKDYVVADIGLADFGRKEITIAETEMPGLMSCRAEFGDAKPLKGARITGSLHMTIQTAVLIETLVALGAEVRWASCNIFSTQDHAAAAIAAAGVPVFAIKGESLEDYWVYTDKIFQWADGGLSNMILDDGGDATMYILLGARAEAGEDVLSHPHSEEEEILFAQIKKRLAASPGWFTKQRDAIKGVTEETTTGVNRLYQLSQKGLLPFPAINVNDSVTKSKFDNKYGCKESLVDGIRRGTDVMMAGKVAVVCGYGDVGKGSAASLSGAGARVKVTEADPICALQAAMDGYEVVLLEDVVSSADIFITTTGNKDVIRIDHMREMKDMAIVGNIGHFDNEIEVAALRNLKWTNVKPQVDLIEFPKGNRIILLSEGRLLNLGNATGHPSFVMSASFTNQTLAQIELFTKPGQYENKVYILPKHLDEKVARLHLDKLGVKLTQLSEEQAAYIGVSPKGPFKSDHYRY.

Thr57, Asp132, and Glu192 together coordinate substrate. 193 to 195 (TTT) serves as a coordination point for NAD(+). Residues Lys222 and Asp226 each contribute to the substrate site. Residues Asn227, 256 to 261 (GYGDVG), Glu279, Asn314, 335 to 337 (IGH), and Asn380 each bind NAD(+).

The protein belongs to the adenosylhomocysteinase family. It depends on NAD(+) as a cofactor.

Its subcellular location is the cytoplasm. It carries out the reaction S-adenosyl-L-homocysteine + H2O = L-homocysteine + adenosine. Its pathway is amino-acid biosynthesis; L-homocysteine biosynthesis; L-homocysteine from S-adenosyl-L-homocysteine: step 1/1. Its function is as follows. May play a key role in the regulation of the intracellular concentration of adenosylhomocysteine. This is Adenosylhomocysteinase from Rhizobium etli (strain CIAT 652).